Here is a 578-residue protein sequence, read N- to C-terminus: Triokinase/FMN cyclase (578 aa).

The 328-residue stretch at 9–336 folds into the DhaK domain; sequence SVAGCADDAL…IDAETTASAW (328 aa). Dihydroxyacetone contacts are provided by residues 56–59, lysine 109, and aspartate 114; that span reads GSGH. Histidine 221 functions as the Tele-hemiaminal-histidine intermediate in the catalytic mechanism. Position 350 is a phosphoserine (serine 350). Residues 372–571 enclose the DhaL domain; sequence KQMVLVLEWV…AAAILRAILE (200 aa). ATP contacts are provided by residues 401 to 404, 446 to 447, glycine 486, and 494 to 495; these read DGDC, SS, and TM. Residues serine 511 and serine 545 each carry the phosphoserine modification. Residue 556-558 participates in ATP binding; that stretch reads DPG.

In terms of assembly, homodimer. Interacts with IFIH1 (via the CARD domains), the interaction is inhibited by viral infection. The cofactor is Mg(2+). It depends on Mn(2+) as a cofactor. Co(2+) is required as a cofactor.

It carries out the reaction dihydroxyacetone + ATP = dihydroxyacetone phosphate + ADP + H(+). It catalyses the reaction D-glyceraldehyde + ATP = D-glyceraldehyde 3-phosphate + ADP + H(+). The enzyme catalyses FAD = riboflavin cyclic-4',5'-phosphate + AMP + H(+). Its activity is regulated as follows. Each activity is inhibited by the substrate(s) of the other. In terms of biological role, catalyzes both the phosphorylation of dihydroxyacetone and of glyceraldehyde, and the splitting of ribonucleoside diphosphate-X compounds among which FAD is the best substrate. Represses IFIH1-mediated cellular antiviral response. The protein is Triokinase/FMN cyclase (TKFC) of Bos taurus (Bovine).